A 207-amino-acid polypeptide reads, in one-letter code: Thiamine-phosphate synthase (207 aa).

4-amino-2-methyl-5-(diphosphooxymethyl)pyrimidine-binding positions include 36–40 (QLRLK) and N68. 2 residues coordinate Mg(2+): D69 and D88. Residue T107 coordinates 4-amino-2-methyl-5-(diphosphooxymethyl)pyrimidine. 134-136 (TGT) lines the 2-[(2R,5Z)-2-carboxy-4-methylthiazol-5(2H)-ylidene]ethyl phosphate pocket. K137 serves as a coordination point for 4-amino-2-methyl-5-(diphosphooxymethyl)pyrimidine. Residue G164 coordinates 2-[(2R,5Z)-2-carboxy-4-methylthiazol-5(2H)-ylidene]ethyl phosphate.

This sequence belongs to the thiamine-phosphate synthase family. Requires Mg(2+) as cofactor.

It carries out the reaction 2-[(2R,5Z)-2-carboxy-4-methylthiazol-5(2H)-ylidene]ethyl phosphate + 4-amino-2-methyl-5-(diphosphooxymethyl)pyrimidine + 2 H(+) = thiamine phosphate + CO2 + diphosphate. The catalysed reaction is 2-(2-carboxy-4-methylthiazol-5-yl)ethyl phosphate + 4-amino-2-methyl-5-(diphosphooxymethyl)pyrimidine + 2 H(+) = thiamine phosphate + CO2 + diphosphate. It catalyses the reaction 4-methyl-5-(2-phosphooxyethyl)-thiazole + 4-amino-2-methyl-5-(diphosphooxymethyl)pyrimidine + H(+) = thiamine phosphate + diphosphate. It functions in the pathway cofactor biosynthesis; thiamine diphosphate biosynthesis; thiamine phosphate from 4-amino-2-methyl-5-diphosphomethylpyrimidine and 4-methyl-5-(2-phosphoethyl)-thiazole: step 1/1. In terms of biological role, condenses 4-methyl-5-(beta-hydroxyethyl)thiazole monophosphate (THZ-P) and 2-methyl-4-amino-5-hydroxymethyl pyrimidine pyrophosphate (HMP-PP) to form thiamine monophosphate (TMP). The protein is Thiamine-phosphate synthase of Rhodospirillum centenum (strain ATCC 51521 / SW).